We begin with the raw amino-acid sequence, 358 residues long: Peptide chain release factor 1 (358 aa).

The residue at position 233 (glutamine 233) is an N5-methylglutamine.

It belongs to the prokaryotic/mitochondrial release factor family. In terms of processing, methylated by PrmC. Methylation increases the termination efficiency of RF1.

It is found in the cytoplasm. In terms of biological role, peptide chain release factor 1 directs the termination of translation in response to the peptide chain termination codons UAG and UAA. This Staphylococcus aureus (strain MRSA252) protein is Peptide chain release factor 1.